A 155-amino-acid chain; its full sequence is MKLLIVAVGQRVPDWAQTAYEDYAKRFPPELKVELKAVKTEPRGSKTLETLYAAERERIEAAIPRGTRVVALDERGTSLTTKALAARLKDWQLGGDDVALVIGGPDGLDPAFRQAAHERIRLSDLTLPHAMVRVLLIEQLYRAWSVNAGHPYHRE.

S-adenosyl-L-methionine-binding positions include Leu-72, Gly-103, and 122-127; that span reads LSDLTL.

Belongs to the RNA methyltransferase RlmH family. As to quaternary structure, homodimer.

It localises to the cytoplasm. It carries out the reaction pseudouridine(1915) in 23S rRNA + S-adenosyl-L-methionine = N(3)-methylpseudouridine(1915) in 23S rRNA + S-adenosyl-L-homocysteine + H(+). Its function is as follows. Specifically methylates the pseudouridine at position 1915 (m3Psi1915) in 23S rRNA. This Paracidovorax citrulli (strain AAC00-1) (Acidovorax citrulli) protein is Ribosomal RNA large subunit methyltransferase H.